Reading from the N-terminus, the 284-residue chain is 4-diphosphocytidyl-2-C-methyl-D-erythritol kinase (284 aa).

The active site involves Lys-14. ATP is bound at residue 98–108; that stretch reads PMGGGLGGGSS. Asp-140 is an active-site residue.

It belongs to the GHMP kinase family. IspE subfamily.

The catalysed reaction is 4-CDP-2-C-methyl-D-erythritol + ATP = 4-CDP-2-C-methyl-D-erythritol 2-phosphate + ADP + H(+). It functions in the pathway isoprenoid biosynthesis; isopentenyl diphosphate biosynthesis via DXP pathway; isopentenyl diphosphate from 1-deoxy-D-xylulose 5-phosphate: step 3/6. Its function is as follows. Catalyzes the phosphorylation of the position 2 hydroxy group of 4-diphosphocytidyl-2C-methyl-D-erythritol. This chain is 4-diphosphocytidyl-2-C-methyl-D-erythritol kinase, found in Shewanella baltica (strain OS155 / ATCC BAA-1091).